A 455-amino-acid chain; its full sequence is Argininosuccinate lyase (455 aa).

Belongs to the lyase 1 family. Argininosuccinate lyase subfamily.

It localises to the cytoplasm. The enzyme catalyses 2-(N(omega)-L-arginino)succinate = fumarate + L-arginine. It participates in amino-acid biosynthesis; L-arginine biosynthesis; L-arginine from L-ornithine and carbamoyl phosphate: step 3/3. The protein is Argininosuccinate lyase of Roseiflexus castenholzii (strain DSM 13941 / HLO8).